A 584-amino-acid chain; its full sequence is Arginine--tRNA ligase (584 aa).

The 'HIGH' region signature appears at 130–140 (PNVAKEMHVGH).

The protein belongs to the class-I aminoacyl-tRNA synthetase family. Monomer.

Its subcellular location is the cytoplasm. The enzyme catalyses tRNA(Arg) + L-arginine + ATP = L-arginyl-tRNA(Arg) + AMP + diphosphate. The sequence is that of Arginine--tRNA ligase from Protochlamydia amoebophila (strain UWE25).